The sequence spans 337 residues: Fructose-1,6-bisphosphatase class 1 (337 aa).

Mg(2+)-binding residues include E91, D113, L115, and D116. Substrate-binding positions include 116–119 (DGSS), N209, Y242, and K275. Mg(2+) is bound at residue E281.

The protein belongs to the FBPase class 1 family. As to quaternary structure, homotetramer. Mg(2+) is required as a cofactor.

It localises to the cytoplasm. It carries out the reaction beta-D-fructose 1,6-bisphosphate + H2O = beta-D-fructose 6-phosphate + phosphate. It functions in the pathway carbohydrate biosynthesis; gluconeogenesis. The protein is Fructose-1,6-bisphosphatase class 1 of Nitratidesulfovibrio vulgaris (strain DP4) (Desulfovibrio vulgaris).